The sequence spans 492 residues: N-succinylglutamate 5-semialdehyde dehydrogenase (492 aa).

220 to 225 is an NAD(+) binding site; sequence GSASTG. Active-site residues include Glu-243 and Cys-277.

This sequence belongs to the aldehyde dehydrogenase family. AstD subfamily.

It catalyses the reaction N-succinyl-L-glutamate 5-semialdehyde + NAD(+) + H2O = N-succinyl-L-glutamate + NADH + 2 H(+). It participates in amino-acid degradation; L-arginine degradation via AST pathway; L-glutamate and succinate from L-arginine: step 4/5. Its function is as follows. Catalyzes the NAD-dependent reduction of succinylglutamate semialdehyde into succinylglutamate. The protein is N-succinylglutamate 5-semialdehyde dehydrogenase of Salmonella paratyphi B (strain ATCC BAA-1250 / SPB7).